We begin with the raw amino-acid sequence, 166 residues long: MRCPFCGFSDSRVLDSRPTVEGNSIRRRRECCGCSKRFTTYERVDEPSLIVVKKDGRREAFHRQKLLQGLIKACQKRPVSTEKLEAIVDGIERELRQTMEPEIKSQYIGELVMERLRKLDEVAYVRFASVYREFRDAESFMEELKNLLEKNREGLRGGPGDHVQDH.

The segment at 3–34 (CPFCGFSDSRVLDSRPTVEGNSIRRRRECCGC) is a zinc-finger region. Positions 49–139 (LIVVKKDGRR…VYREFRDAES (91 aa)) constitute an ATP-cone domain.

It belongs to the NrdR family. It depends on Zn(2+) as a cofactor.

Its function is as follows. Negatively regulates transcription of bacterial ribonucleotide reductase nrd genes and operons by binding to NrdR-boxes. In Pelotomaculum thermopropionicum (strain DSM 13744 / JCM 10971 / SI), this protein is Transcriptional repressor NrdR.